The following is a 1713-amino-acid chain: Serine/threonine-protein kinase MRCK beta (1713 aa).

The region spanning 76 to 342 (FEIIKVIGRG…IEDFKKHAFF (267 aa)) is the Protein kinase domain. Residues 82–90 (IGRGAFGEV) and Lys-105 each bind ATP. Asp-200 functions as the Proton acceptor in the catalytic mechanism. Residues Ser-221 and Ser-233 each carry the phosphoserine; by autocatalysis modification. The residue at position 239 (Thr-239) is a Phosphothreonine; by autocatalysis. Positions 343–413 (EGLNWENIRN…TTESCFSDRG (71 aa)) constitute an AGC-kinase C-terminal domain. Phosphothreonine is present on Thr-423. A coiled-coil region spans residues 434–649 (LENSLQIEAY…ASKERKLREH (216 aa)). Arg-671 is modified (omega-N-methylarginine). Coiled-coil stretches lie at residues 681–815 (QEIS…AHWE) and 878–939 (ELQS…FRAD). Ser-927 is subject to Phosphoserine. A Phosphotyrosine modification is found at Tyr-954. Positions 971-994 (ASDQETQASKMDLSPSVSVATSTE) are enriched in polar residues. Positions 971–1022 (ASDQETQASKMDLSPSVSVATSTEQQEDMARPQQRPSPVPLPSTQALAMAGP) are disordered. The segment at 1026-1076 (AHQFSIKSFPSPTQCSHCTSLMVGLIRQGYACEVCAFSCHVSCKDSAPQVC) adopts a Phorbol-ester/DAG-type zinc-finger fold. The PH domain occupies 1096-1215 (GTAYKGYVKV…WVGILEGLQA (120 aa)). One can recognise a CNH domain in the interval 1241 to 1515 (IKAVLAAAIV…RPLNSDGSLN (275 aa)). Residues 1585–1598 (ISNPTNFNHVAHMG) enclose the CRIB domain. A disordered region spans residues 1616 to 1713 (TVQEEKQGPT…EGLDQPSCDA (98 aa)). Positions 1666 to 1677 (DFDKEPDSDSTK) are enriched in basic and acidic residues. Ser-1682, Ser-1684, Ser-1688, Ser-1692, and Ser-1695 each carry phosphoserine.

This sequence belongs to the protein kinase superfamily. AGC Ser/Thr protein kinase family. DMPK subfamily. As to quaternary structure, homodimer and homotetramer via the coiled coil regions. Interacts tightly with GTP-bound but not GDP-bound CDC42. Interacts with TJP1; this interaction requires the presence of catalytically active CDC42. Forms a tripartite complex with MYO18A and LURAP1 with the latter acting as an adapter connecting CDC42BPB and MYO18A. LURAP1 binding results in activation of CDC42BPB by abolition of its negative autoregulation. Interacts with STRIP1, STRN3 and SIKE1. Interacts with CPNE4 (via VWFA domain). Interacts with LURAP1. Interacts (via AGC-kinase C-terminal domain) with FAM89B/LRAP25 (via LRR repeat). Forms a tripartite complex with FAM89B/LRAP25 and LIMK1. It depends on Mg(2+) as a cofactor. Post-translationally, proteolytically cleaved by caspases upon apoptosis induction.

Its subcellular location is the cytoplasm. The protein localises to the cell membrane. The protein resides in the cell junction. It is found in the cell projection. It localises to the lamellipodium. It catalyses the reaction L-seryl-[protein] + ATP = O-phospho-L-seryl-[protein] + ADP + H(+). The enzyme catalyses L-threonyl-[protein] + ATP = O-phospho-L-threonyl-[protein] + ADP + H(+). Maintained in an inactive, closed conformation by an interaction between the kinase domain and the negative autoregulatory C-terminal coiled-coil region. Agonist binding to the phorbol ester binding site disrupts this, releasing the kinase domain to allow N-terminus-mediated dimerization and kinase activation by transautophosphorylation. Inhibited by chelerythrine chloride. Serine/threonine-protein kinase which is an important downstream effector of CDC42 and plays a role in the regulation of cytoskeleton reorganization and cell migration. Regulates actin cytoskeletal reorganization via phosphorylation of PPP1R12C and MYL9/MLC2. In concert with MYO18A and LURAP1, is involved in modulating lamellar actomyosin retrograde flow that is crucial to cell protrusion and migration. Phosphorylates PPP1R12A. In concert with FAM89B/LRAP25 mediates the targeting of LIMK1 to the lamellipodium resulting in its activation and subsequent phosphorylation of CFL1 which is important for lamellipodial F-actin regulation. The polypeptide is Serine/threonine-protein kinase MRCK beta (Mus musculus (Mouse)).